A 207-amino-acid polypeptide reads, in one-letter code: LexA repressor (207 aa).

Positions 28-48 (VREIGEAVGLASSSTVHGHLS) form a DNA-binding region, H-T-H motif. Active-site for autocatalytic cleavage activity residues include serine 130 and lysine 168.

It belongs to the peptidase S24 family. Homodimer.

The enzyme catalyses Hydrolysis of Ala-|-Gly bond in repressor LexA.. In terms of biological role, represses a number of genes involved in the response to DNA damage (SOS response), including recA and lexA. In the presence of single-stranded DNA, RecA interacts with LexA causing an autocatalytic cleavage which disrupts the DNA-binding part of LexA, leading to derepression of the SOS regulon and eventually DNA repair. This Staphylococcus aureus (strain Mu3 / ATCC 700698) protein is LexA repressor.